The primary structure comprises 415 residues: Serine/threonine transporter SstT (415 aa).

The next 8 membrane-spanning stretches (helical) occupy residues 23–43 (ILVG…AAIA), 47–67 (LGTL…LMLV), 85–105 (ILWL…LFSF), 144–164 (ALLK…GFAL), 181–201 (AVTF…FGLV), 220–240 (LMVL…LIVF), 303–323 (GAAI…GIAV), and 333–353 (VVAS…LLLI).

Belongs to the dicarboxylate/amino acid:cation symporter (DAACS) (TC 2.A.23) family.

The protein localises to the cell inner membrane. The catalysed reaction is L-serine(in) + Na(+)(in) = L-serine(out) + Na(+)(out). The enzyme catalyses L-threonine(in) + Na(+)(in) = L-threonine(out) + Na(+)(out). Functionally, involved in the import of serine and threonine into the cell, with the concomitant import of sodium (symport system). The sequence is that of Serine/threonine transporter SstT from Cronobacter sakazakii (strain ATCC BAA-894) (Enterobacter sakazakii).